Here is a 301-residue protein sequence, read N- to C-terminus: Ribosomal protein L11 methyltransferase (301 aa).

Residues threonine 147, glycine 168, aspartate 190, and asparagine 237 each coordinate S-adenosyl-L-methionine.

This sequence belongs to the methyltransferase superfamily. PrmA family.

It is found in the cytoplasm. It catalyses the reaction L-lysyl-[protein] + 3 S-adenosyl-L-methionine = N(6),N(6),N(6)-trimethyl-L-lysyl-[protein] + 3 S-adenosyl-L-homocysteine + 3 H(+). Methylates ribosomal protein L11. The chain is Ribosomal protein L11 methyltransferase from Synechococcus sp. (strain RCC307).